Consider the following 181-residue polypeptide: MMKLKKVFIDIGSILRSIWMIGMQAFSKRETRMYPEVPYIPSPRYRGRIVLTRDSSGRERCVACNLCAVACPVGCISLKKGESTDGRWYPKFFRINFSRCIFCGMCEEACPTAAIQLTPDFEMSDFKRHDLVYEKSDLLISGPGKYLEYDFYQFSGKEILDKKKGDAIKESKPINVKNILP.

2 4Fe-4S ferredoxin-type domains span residues 52-81 and 91-120; these read TRDS…LKKG and KFFR…LTPD. Residues C61, C64, C67, C71, C100, C103, C106, and C110 each contribute to the [4Fe-4S] cluster site.

The protein belongs to the complex I 23 kDa subunit family. As to quaternary structure, NDH-1 is composed of 13 different subunits. Subunits NuoA, H, J, K, L, M, N constitute the membrane sector of the complex. It depends on [4Fe-4S] cluster as a cofactor.

Its subcellular location is the cell inner membrane. It carries out the reaction a quinone + NADH + 5 H(+)(in) = a quinol + NAD(+) + 4 H(+)(out). NDH-1 shuttles electrons from NADH, via FMN and iron-sulfur (Fe-S) centers, to quinones in the respiratory chain. The immediate electron acceptor for the enzyme in this species is believed to be ubiquinone. Couples the redox reaction to proton translocation (for every two electrons transferred, four hydrogen ions are translocated across the cytoplasmic membrane), and thus conserves the redox energy in a proton gradient. The chain is NADH-quinone oxidoreductase subunit I from Blochmanniella pennsylvanica (strain BPEN).